The sequence spans 422 residues: Enolase (422 aa).

Ser41 serves as a coordination point for Mg(2+). (2R)-2-phosphoglycerate is bound at residue Glu163. Glu204 (proton donor) is an active-site residue. Mg(2+) contacts are provided by Asp241, Glu284, and Asp311. Lys336 serves as the catalytic Proton acceptor. (2R)-2-phosphoglycerate contacts are provided by Arg365, Ser366, and Lys387.

The protein belongs to the enolase family. In terms of assembly, homodimer. Component of the RNA degradosome, a multiprotein complex involved in RNA processing and mRNA degradation. The cofactor is Mg(2+).

The protein resides in the cytoplasm. Its subcellular location is the secreted. It localises to the cell surface. It catalyses the reaction (2R)-2-phosphoglycerate = phosphoenolpyruvate + H2O. It functions in the pathway carbohydrate degradation; glycolysis; pyruvate from D-glyceraldehyde 3-phosphate: step 4/5. Catalyzes the reversible conversion of 2-phosphoglycerate (2-PG) into phosphoenolpyruvate (PEP). It is essential for the degradation of carbohydrates via glycolysis. The chain is Enolase from Legionella pneumophila subsp. pneumophila (strain Philadelphia 1 / ATCC 33152 / DSM 7513).